The chain runs to 632 residues: MSDSFTVSLRPIREKRDRPDSLPREIAQINAQWGSFRELSEAKLREMIEEDKHKDHWEEDDEGDKESTDLETSEQLDQLYKRRAEIIQYALQAHMEASFALDFVSLLLSKHQPRQAETSMSPFLKSAAPLGSLNSEVVNPPPRPDSTLKDIKSVARGWRLQNFNSAADKLLNAGSRLETEVNSETKYWNEVLAVKEKGWKICRLPRESQALGVQYGFLEATPIFRDRGLAALRRTDDGSLFLDKGLIPLKSQGVRVRVRRGDRIVGCSKVCRPPQDAESIESRILQARDTVFEEELFYEVMREARILGTQGVKTRQNLVQVPVSDEQEILLDLVDWDQDRDPDAADSTEQDVFADAVAHSIRILLTYAHRQNLRRRTQPPPPLAPKRRPVPEYHILRPIMAYLQHKSHIQWLESLINDLRGVLQSAGIPCDFKATQFSSIGTLQPSNQVPKVEAVAGVFLAPFLSTFSGNLVTPQSSFRIQIRTNLAVPPFGTFYELSVNLPQYPDVQPPNHVGLQDEVSAILTHVIMLDIAAAIPLQCRDTADKEAKERVSWDVDYPHHGELHFLSRNGQSRKMKISLSRQELTIETYQLNRMRGVTPGAATSPTLWQTWRADSPETRPTLSEFVAQASQP.

Disordered regions lie at residues M1–S21 and E50–T72. The segment covering P11–S21 has biased composition (basic and acidic residues). Over residues E58 to T72 the composition is skewed to acidic residues.

Belongs to the Mediator complex subunit 17 family. As to quaternary structure, component of the Mediator complex.

The protein resides in the nucleus. In terms of biological role, component of the Mediator complex, a coactivator involved in the regulated transcription of nearly all RNA polymerase II-dependent genes. Mediator functions as a bridge to convey information from gene-specific regulatory proteins to the basal RNA polymerase II transcription machinery. Mediator is recruited to promoters by direct interactions with regulatory proteins and serves as a scaffold for the assembly of a functional preinitiation complex with RNA polymerase II and the general transcription factors. This is Mediator of RNA polymerase II transcription subunit 17 (srb4) from Emericella nidulans (strain FGSC A4 / ATCC 38163 / CBS 112.46 / NRRL 194 / M139) (Aspergillus nidulans).